Reading from the N-terminus, the 429-residue chain is MLLAGAIFILTIVLVIWQPKGLGIGWSATLGAVLALASGVIHIADIPVVWNIVWNATATFIAVIIISLLLDESGFFEWAALHVSRWGNGRGRLLFTYIVLLGAAVAALFANDGAALILTPIVIAMLLALGFSKSTTLAFVMAAGFISDTASLPLIVSNLVNIVSADFFKLGFTEYASVMVPVDIAAIIATLVMLHLFFRKDIPPTYELARLKEPAKAIKDPATFRTGWVVLLLLLVGFFVLEPMGIPVSAIAAVGAAVLFAVAKKGHGINTGKVLRGAPWQIVIFSLGMYLVIYGLRNAGLTDYLSDVLNELADKGLWAATLGTGFLTALLSSIMNNMPTVLIGALSIDGSTATGVIKEAMIYANVIGCDLGPKITPIGSLATLLWLHVLSQKNMTITWGYYFRTGIVMTLPVLFVTLAALALRLSVTL.

10 consecutive transmembrane segments (helical) span residues 24-44 (IGWS…IHIA), 46-66 (IPVV…VIII), 98-118 (IVLL…ALIL), 121-141 (IVIA…AFVM), 178-198 (VMVP…HLFF), 228-248 (WVVL…GIPV), 249-269 (SAIA…GHGI), 274-294 (VLRG…LVIY), 316-335 (GLWA…SSIM), and 407-427 (IVMT…RLSV).

Its subcellular location is the cell inner membrane. Involved in arsenical resistance. Thought to form the channel of an arsenite pump. The polypeptide is Arsenical pump membrane protein (arsB) (Escherichia coli).